The following is a 547-amino-acid chain: CTP synthase (547 aa).

Residues 1–265 (MARYVFITGG…DQAVLDAFGI (265 aa)) are amidoligase domain. CTP is bound at residue Ser13. A UTP-binding site is contributed by Ser13. ATP contacts are provided by residues 14-19 (SLGKGL) and Asp71. Mg(2+)-binding residues include Asp71 and Glu139. Residues 146 to 148 (DIE), 186 to 191 (KTKPTQ), and Lys222 each bind CTP. UTP-binding positions include 186-191 (KTKPTQ) and Lys222. The 256-residue stretch at 291–546 (RVAIVGKYTQ…VRAAVEVSRL (256 aa)) folds into the Glutamine amidotransferase type-1 domain. Position 353 (Gly353) interacts with L-glutamine. The active-site Nucleophile; for glutamine hydrolysis is Cys380. L-glutamine is bound by residues 381–384 (LGMQ), Glu404, and Arg474. Catalysis depends on residues His519 and Glu521.

It belongs to the CTP synthase family. Homotetramer.

It catalyses the reaction UTP + L-glutamine + ATP + H2O = CTP + L-glutamate + ADP + phosphate + 2 H(+). The enzyme catalyses L-glutamine + H2O = L-glutamate + NH4(+). It carries out the reaction UTP + NH4(+) + ATP = CTP + ADP + phosphate + 2 H(+). Its pathway is pyrimidine metabolism; CTP biosynthesis via de novo pathway; CTP from UDP: step 2/2. Its activity is regulated as follows. Allosterically activated by GTP, when glutamine is the substrate; GTP has no effect on the reaction when ammonia is the substrate. The allosteric effector GTP functions by stabilizing the protein conformation that binds the tetrahedral intermediate(s) formed during glutamine hydrolysis. Inhibited by the product CTP, via allosteric rather than competitive inhibition. Catalyzes the ATP-dependent amination of UTP to CTP with either L-glutamine or ammonia as the source of nitrogen. Regulates intracellular CTP levels through interactions with the four ribonucleotide triphosphates. The protein is CTP synthase of Cereibacter sphaeroides (strain ATCC 17029 / ATH 2.4.9) (Rhodobacter sphaeroides).